A 444-amino-acid chain; its full sequence is MTERKYFGTDGVRAVAGEFPLTPAWVMALGAAAGEVFKRRNPRASVVIGKDTRQSGDMLEAALAAGLTSRGVNVVHLGVLPTPGVSYLTRHLGAEAGVVISASHNPYEDNGIKFFGPGGGKLSDATELEIEAAIDEAATLAPVTGVNLGSVTNYTEAERLYTAFLSSHAPDLSGMRIALDCANGAAYRVAPKVFQQAGADVFAVYTTPDGRNINRGCGSTHMDHLRLIVREGDYDLGIAFDGDADRALFVDSRGNMIHGDHMLLLSARARGEKAVVATIMTNMALEVKLQEAGLTLERTAVGDRYVHERLHAKGLNLGGEQSGHVLFLDVSPTGDGVLTALLTLSSMKKLGTTLDALYDELVMFPQTLVNVRVKDKKAIASDPAVQHAVADAEKQLAGKGRINLRPSGTENLIRVMVEGQDEGEIHDIAAAVAKVVEERGAAGA.

Catalysis depends on Ser-103, which acts as the Phosphoserine intermediate. Mg(2+) contacts are provided by Ser-103, Asp-241, Asp-243, and Asp-245. Ser-103 bears the Phosphoserine mark.

This sequence belongs to the phosphohexose mutase family. Mg(2+) serves as cofactor. Post-translationally, activated by phosphorylation.

The enzyme catalyses alpha-D-glucosamine 1-phosphate = D-glucosamine 6-phosphate. Functionally, catalyzes the conversion of glucosamine-6-phosphate to glucosamine-1-phosphate. This chain is Phosphoglucosamine mutase, found in Deinococcus radiodurans (strain ATCC 13939 / DSM 20539 / JCM 16871 / CCUG 27074 / LMG 4051 / NBRC 15346 / NCIMB 9279 / VKM B-1422 / R1).